The following is a 634-amino-acid chain: MAGDEIKAALFLCALQNAVRHGGVPQAGAVIGMVMGAHPELRKQAKEVSAAAKDAIADVAALSPEERVTKLQSLSPEMFAALHEKHEKKKVLPDLEGAEHGVVMRFAPNPSGPLHIGHARAAALNDAYVKQYGGRYILRIEDTDPKRVDPEAYDMVKEDIAWMGLGITETVTQSERFPIYYDLCKQLIERGGAYVCTCENEHFKALKDAKKACPCRDQPVETALLLWEKMLNGGFKEGEASVRVKTDLLNPDPAMRDYPIFRILDAPLHPKIGDARVYPLMNFSVVADDHLLGVTHVIRGKDHIANTRRQRYIYDHFGWKVPVYRHYGRMGIEGVVLSTSQMHAGIDEGKYTGWDDIHLGTLRALARRGISPDAVKNAMIAIGIGDVDISFSWDNLYAENKKIVDPVANRYFFVPDPLEAKIAGASAHTAHAMLHPGHEEKGTRTLEFTGTVLIPRAEIFSVIVSSLNDISQGGDYESPQAKISSENVSPITSINEKKESVHSDNLPKLEGSLSSSLNDRKLVPRKYEPKREITMLRLKDLFNVNITWDGETPSFSYGGDSLADARAAKARIIQWLPAQSFVPCTLLTQDGEMKGACEPAVTTEVGKVVQFERIAFARIDAVTESGVRAYFTHT.

Positions 108 to 118 match the 'HIGH' region motif; that stretch reads PNPSGPLHIGH.

It belongs to the class-I aminoacyl-tRNA synthetase family. Glutamate--tRNA ligase type 2 subfamily.

The protein localises to the cytoplasm. It catalyses the reaction tRNA(Glu) + L-glutamate + ATP = L-glutamyl-tRNA(Glu) + AMP + diphosphate. In terms of biological role, catalyzes the attachment of glutamate to tRNA(Glu) in a two-step reaction: glutamate is first activated by ATP to form Glu-AMP and then transferred to the acceptor end of tRNA(Glu). The chain is Glutamate--tRNA ligase from Methanoregula boonei (strain DSM 21154 / JCM 14090 / 6A8).